The following is a 267-amino-acid chain: Phosphatidylglycerol--prolipoprotein diacylglyceryl transferase (267 aa).

7 consecutive transmembrane segments (helical) span residues 17–37 (LNIR…WLLA), 56–76 (LVTY…TLFY), 91–111 (IWNG…AIWL), 120–140 (LFEV…AGRL), 173–193 (QLYE…LFSA), 199–219 (MAVS…VEFF), and 236–256 (MGQI…GFAM). An a 1,2-diacyl-sn-glycero-3-phospho-(1'-sn-glycerol)-binding site is contributed by Arg-139.

This sequence belongs to the Lgt family.

Its subcellular location is the cell inner membrane. The catalysed reaction is L-cysteinyl-[prolipoprotein] + a 1,2-diacyl-sn-glycero-3-phospho-(1'-sn-glycerol) = an S-1,2-diacyl-sn-glyceryl-L-cysteinyl-[prolipoprotein] + sn-glycerol 1-phosphate + H(+). It functions in the pathway protein modification; lipoprotein biosynthesis (diacylglyceryl transfer). In terms of biological role, catalyzes the transfer of the diacylglyceryl group from phosphatidylglycerol to the sulfhydryl group of the N-terminal cysteine of a prolipoprotein, the first step in the formation of mature lipoproteins. This chain is Phosphatidylglycerol--prolipoprotein diacylglyceryl transferase, found in Oleidesulfovibrio alaskensis (strain ATCC BAA-1058 / DSM 17464 / G20) (Desulfovibrio alaskensis).